The sequence spans 213 residues: Cytochrome b6 (213 aa).

The chain crosses the membrane as a helical span at residues 30-50 (IFFCLGGLTLLCFIVQCLTGI). Cys-33 serves as a coordination point for heme c. His-84 and His-98 together coordinate heme b. The next 3 helical transmembrane spans lie at 88–108 (CQLM…TGAF), 114–134 (LNWV…FTGY), and 184–204 (LHVM…FIMI). Heme b is bound by residues His-185 and His-200.

Belongs to the cytochrome b family. PetB subfamily. The subunits of the cytochrome bc complex are a Rieske Fe-S protein (PetC), cytochrome b6 (PetB), subunit IV (PetD), and a diheme cytochrome c (PetX). Requires heme b as cofactor. It depends on heme c as a cofactor.

The protein resides in the cell membrane. In terms of biological role, component of the cytochrome bc complex which donates electrons to the photosynthetic reaction center. The polypeptide is Cytochrome b6 (Heliomicrobium gestii (Heliobacterium gestii)).